A 504-amino-acid polypeptide reads, in one-letter code: Cytochrome P450 monooxygenase iccC (504 aa).

Residues 7–26 (LPWILLYTGFLAIFLSRLFS) traverse the membrane as a helical segment. N-linked (GlcNAc...) asparagine glycans are attached at residues Asn134, Asn312, Asn365, and Asn374. Residue Cys452 participates in heme binding. Asn494 carries an N-linked (GlcNAc...) asparagine glycan.

It belongs to the cytochrome P450 family. It depends on heme as a cofactor.

It is found in the membrane. It catalyses the reaction (3E,5S)-3-[(2E,4E,8S,10E,12Z)-1-hydroxy-4,8-dimethyltetradeca-2,4,10,12-tetraen-1-ylidene]-5-[(4-hydroxyphenyl)methyl]pyrrolidine-2,4-dione + reduced [NADPH--hemoprotein reductase] + O2 = 3-[(2E,4E,8S,10E,12Z)-4,8-dimethyltetradeca-2,4,10,12-tetraenoyl]-4-hydroxy-5-(4-hydroxyphenyl)-1,2-dihydropyridin-2-one + oxidized [NADPH--hemoprotein reductase] + 2 H2O. It participates in mycotoxin biosynthesis. Its function is as follows. Cytochrome P450 monooxygenase; part of the gene cluster that mediates the biosynthesis of ilicicolin H, a 4-hydroxy-2-pyridonealkaloid that has potent and broad antifungal activities by inhibiting the mitochondrial respiration chain. IccC catalyzes the ring expansion of the tetramate intermediate to the acyclic 2-pyridone intermediate that contains the trans bis-diene chain. The biosynthesis of ilicicolin H starts with formation of the tetramic acid by the hybrid PKS-NRPS synthetase iccA with the partnering trans-enoyl reductase iccB since iccA lacks a designated enoylreductase (ER) domain. The cytochrome P450 monooxygenase iccC then catalyzes the ring expansion of the tetramate to the acyclic 2-pyridone. The pericyclase iccD further converts the acyclic 2-pyridone into 8-epi-ilicicolin H. Finally, the epimerase iccE converts 8-epi-ilicicolin H into ilicicolin H via epimerization. IccA to iccE are sufficient for ilicicolin H biosynthesis and the roles of the remaining enzymes, iccF, iccG and iccH within the pathway have still to be determined. This is Cytochrome P450 monooxygenase iccC from Talaromyces variabilis (Penicillium variabile).